Consider the following 517-residue polypeptide: Optineurin (517 aa).

2 coiled-coil regions span residues 15 to 127 (NLGS…DLVA) and 174 to 453 (KAES…LGRH). Disordered regions lie at residues 216–237 (KLEHADSSAQTSLPSAAETNAS) and 454–488 (SMSEMQRRHVPRGANPQGPTAPNNLPGGRGEWQQQ). Over residues 222–237 (SSAQTSLPSAAETNAS) the composition is skewed to polar residues. A CCHC NOA-type zinc finger spans residues 487-517 (QQNIPDHACPKCGEVLPDLDSLQIHIMDCII). 4 residues coordinate Zn(2+): Cys495, Cys498, His511, and Cys515.

It is found in the cytoplasm. The protein localises to the perinuclear region. The protein resides in the golgi apparatus. Its subcellular location is the trans-Golgi network. It localises to the cytoplasmic vesicle. It is found in the recycling endosome. The protein localises to the autophagosome. Probably part of the TNF-alpha signaling pathway that can shift the equilibrium toward induction of cell death. May act by regulating membrane trafficking and cellular morphogenesis. This Danio rerio (Zebrafish) protein is Optineurin (optn).